A 221-amino-acid polypeptide reads, in one-letter code: Germin-like protein 8-2 (221 aa).

The signal sequence occupies residues 1–24 (MASSSFSFLLVAALLGLASWKAIA). An intrachain disulfide couples Cys-34 to Cys-49. N-linked (GlcNAc...) asparagine glycosylation is found at Asn-54 and Asn-79. Residues 64 to 215 (AMLDKPRDTN…AFQVDKKIID (152 aa)) enclose the Cupin type-1 domain. Mn(2+) is bound by residues His-112, His-114, Glu-119, and His-160.

It belongs to the germin family. As to quaternary structure, oligomer (believed to be a pentamer but probably hexamer).

Its subcellular location is the secreted. The protein localises to the extracellular space. It localises to the apoplast. Functionally, plays a role in broad-spectrum disease resistance. Probably has no oxalate oxidase activity even if the active site is conserved. The polypeptide is Germin-like protein 8-2 (GER3) (Oryza sativa subsp. japonica (Rice)).